Here is a 393-residue protein sequence, read N- to C-terminus: Branched-chain amino acid aminotransferase 1, mitochondrial (393 aa).

The transit peptide at 1–34 (MIHRGLWLHNLVQSYRVGSSSSSSTLFKLVYRYN) directs the protein to the mitochondrion. Pyridoxal 5'-phosphate is bound at residue Arg138. The Proton acceptor role is filled by Lys240. An N6-(pyridoxal phosphate)lysine modification is found at Lys240. Glu276 contributes to the pyridoxal 5'-phosphate binding site.

It belongs to the class-IV pyridoxal-phosphate-dependent aminotransferase family. Requires pyridoxal 5'-phosphate as cofactor. In terms of tissue distribution, expressed specifically in lupulin glands.

It is found in the mitochondrion. It catalyses the reaction L-isoleucine + 2-oxoglutarate = (S)-3-methyl-2-oxopentanoate + L-glutamate. The catalysed reaction is L-leucine + 2-oxoglutarate = 4-methyl-2-oxopentanoate + L-glutamate. It carries out the reaction L-valine + 2-oxoglutarate = 3-methyl-2-oxobutanoate + L-glutamate. It functions in the pathway amino-acid biosynthesis; L-isoleucine biosynthesis; L-isoleucine from 2-oxobutanoate: step 4/4. It participates in amino-acid biosynthesis; L-leucine biosynthesis; L-leucine from 3-methyl-2-oxobutanoate: step 4/4. Its pathway is amino-acid biosynthesis; L-valine biosynthesis; L-valine from pyruvate: step 4/4. Converts 2-oxo acids to branched-chain amino acids (BCAA). Shows no kinetic preferences corresponding to anabolic or catabolic functions, but likely involved in BCAA catabolism. The polypeptide is Branched-chain amino acid aminotransferase 1, mitochondrial (Humulus lupulus (European hop)).